The primary structure comprises 129 residues: uncharacterized protein (129 aa).

The protein to M.pneumoniae MPN_376 N-terminal region.

This is an uncharacterized protein from Mycoplasma pneumoniae (strain ATCC 29342 / M129 / Subtype 1) (Mycoplasmoides pneumoniae).